The sequence spans 263 residues: Phosphoinositide-3-kinase-interacting protein 1 (263 aa).

A signal peptide spans 1–18; the sequence is MFGRLYFMLLLSVGLVDC. At 19 to 163 the chain is on the extracellular side; it reads LSVVKDCITN…SGPKKKKDLG (145 aa). Residues 24–99 form the Kringle domain; the sequence is DCITNNGEDY…KKEACDIRIC (76 aa). 3 disulfide bridges follow: Cys-25–Cys-99, Cys-46–Cys-80, and Cys-69–Cys-94. N-linked (GlcNAc...) asparagine glycosylation is present at Asn-103. The helical transmembrane segment at 164 to 184 threads the bilayer; the sequence is TLGYVLAVFMMAIIILLGGGI. Residues 185-263 are Cytoplasmic-facing; it reads TMGYFYKRGR…LMGSAGTPGA (79 aa). A disordered region spans residues 239–263; the sequence is NNQTPTQEPVEGADPLMGSAGTPGA.

It localises to the cell membrane. Negative regulator of hepatic phosphatidylinositol 3-kinase (PI3K) activity. In Danio rerio (Zebrafish), this protein is Phosphoinositide-3-kinase-interacting protein 1 (pik3ip1).